Reading from the N-terminus, the 142-residue chain is Fusaric acid resistance protein FusB (142 aa).

The disordered stretch occupies residues 73-142; it reads AAPCSRKAST…ASCSPAIRPR (70 aa). Low complexity predominate over residues 81-142; sequence STGSPARSSG…ASCSPAIRPR (62 aa).

Functionally, involved in the resistance (detoxification) of the fungal toxin fusaric acid. This is Fusaric acid resistance protein FusB (fusB) from Burkholderia cepacia (Pseudomonas cepacia).